A 147-amino-acid chain; its full sequence is Ribosome-binding factor A (147 aa).

A disordered region spans residues 122–147 (QQQFGSVDDDVIENDIEESDDTEGKV). Residues 128-147 (VDDDVIENDIEESDDTEGKV) show a composition bias toward acidic residues.

The protein belongs to the RbfA family. Monomer. Binds 30S ribosomal subunits, but not 50S ribosomal subunits or 70S ribosomes.

It is found in the cytoplasm. In terms of biological role, one of several proteins that assist in the late maturation steps of the functional core of the 30S ribosomal subunit. Associates with free 30S ribosomal subunits (but not with 30S subunits that are part of 70S ribosomes or polysomes). Required for efficient processing of 16S rRNA. May interact with the 5'-terminal helix region of 16S rRNA. The chain is Ribosome-binding factor A from Shewanella oneidensis (strain ATCC 700550 / JCM 31522 / CIP 106686 / LMG 19005 / NCIMB 14063 / MR-1).